The chain runs to 176 residues: Ribosome maturation factor RimM (176 aa).

In terms of domain architecture, PRC barrel spans 97-176 (EDEFYWRDLI…QILVDWDPDF (80 aa)).

The protein belongs to the RimM family. In terms of assembly, binds ribosomal protein uS19.

Its subcellular location is the cytoplasm. An accessory protein needed during the final step in the assembly of 30S ribosomal subunit, possibly for assembly of the head region. Essential for efficient processing of 16S rRNA. May be needed both before and after RbfA during the maturation of 16S rRNA. It has affinity for free ribosomal 30S subunits but not for 70S ribosomes. The sequence is that of Ribosome maturation factor RimM from Shewanella putrefaciens (strain CN-32 / ATCC BAA-453).